Reading from the N-terminus, the 97-residue chain is Class II hydrophobin 1 (97 aa).

An N-terminal signal peptide occupies residues 1-16; the sequence is MKFFAIAALFAAAAVA. Residues 17–22 constitute a propeptide that is removed on maturation; the sequence is QPLEDR. Intrachain disulfides connect cysteine 30–cysteine 79, cysteine 40–cysteine 70, cysteine 41–cysteine 53, and cysteine 80–cysteine 91.

Belongs to the cerato-ulmin hydrophobin family. In terms of assembly, homotetramer. Further self-assembles to form highly ordered films at water-air interfaces through intermolecular interactions.

It localises to the secreted. The protein resides in the cell wall. Its function is as follows. Aerial growth, conidiation, and dispersal of filamentous fungi in the environment rely upon a capability of their secreting small amphipathic proteins called hydrophobins (HPBs) with low sequence identity. Class I can self-assemble into an outermost layer of rodlet bundles on aerial cell surfaces, conferring cellular hydrophobicity that supports fungal growth, development and dispersal; whereas Class II form highly ordered films at water-air interfaces through intermolecular interactions but contribute nothing to the rodlet structure. Hbf1 is a class II hydrophobin that has a role in hyphal development and is in particular required for the formation of aerial hyphae. The chain is Class II hydrophobin 1 from Hypocrea jecorina (Trichoderma reesei).